A 104-amino-acid chain; its full sequence is Large ribosomal subunit protein uL24 (104 aa).

This sequence belongs to the universal ribosomal protein uL24 family. In terms of assembly, part of the 50S ribosomal subunit.

In terms of biological role, one of two assembly initiator proteins, it binds directly to the 5'-end of the 23S rRNA, where it nucleates assembly of the 50S subunit. One of the proteins that surrounds the polypeptide exit tunnel on the outside of the subunit. The protein is Large ribosomal subunit protein uL24 of Corynebacterium kroppenstedtii (strain DSM 44385 / JCM 11950 / CIP 105744 / CCUG 35717).